The sequence spans 98 residues: uncharacterized protein (98 aa).

The first 23 residues, 1–23, serve as a signal peptide directing secretion; the sequence is MKYVALAFVLSLVILQISAQVGA.

As to expression, nacreous layer of shell (at protein level). Expressed primarily in the mantle with highest level in the mantle pallium and lower level in the mantle edge.

It is found in the secreted. This is an uncharacterized protein from Pinctada maxima (Silver-lipped pearl oyster).